A 197-amino-acid polypeptide reads, in one-letter code: Recombination protein RecR (197 aa).

A C4-type zinc finger spans residues 56–71 (CPVCGTLDTRAPCSIC). Residues 79–174 (TLICVVRDVA…TVSGLAQGVP (96 aa)) form the Toprim domain.

Belongs to the RecR family.

May play a role in DNA repair. It seems to be involved in an RecBC-independent recombinational process of DNA repair. It may act with RecF and RecO. The polypeptide is Recombination protein RecR (Rhodospirillum rubrum (strain ATCC 11170 / ATH 1.1.1 / DSM 467 / LMG 4362 / NCIMB 8255 / S1)).